The following is a 768-amino-acid chain: Probable dipeptidyl peptidase 4 (768 aa).

The N-terminal stretch at 1–17 is a signal peptide; the sequence is MKLGKWSVLLLVGCTAA. Residues Asn-38, Asn-81, Asn-104, Asn-113, Asn-221, Asn-282, and Asn-468 are each glycosylated (N-linked (GlcNAc...) asparagine). Ser-616 acts as the Charge relay system in catalysis. The N-linked (GlcNAc...) asparagine glycan is linked to Asn-668. Active-site charge relay system residues include Asp-693 and His-728.

It belongs to the peptidase S9B family.

Its subcellular location is the secreted. It catalyses the reaction Release of an N-terminal dipeptide, Xaa-Yaa-|-Zaa-, from a polypeptide, preferentially when Yaa is Pro, provided Zaa is neither Pro nor hydroxyproline.. Extracellular dipeptidyl-peptidase which removes N-terminal dipeptides sequentially from polypeptides having unsubstituted N-termini provided that the penultimate residue is proline. This chain is Probable dipeptidyl peptidase 4 (dpp4), found in Aspergillus clavatus (strain ATCC 1007 / CBS 513.65 / DSM 816 / NCTC 3887 / NRRL 1 / QM 1276 / 107).